Here is a 246-residue protein sequence, read N- to C-terminus: Allergin-1 (246 aa).

Residues 1-33 form the signal peptide; it reads MGDGDSPMCLSAVSFKGIRCWLDKLLLWALTIS. Topologically, residues 34-150 are extracellular; that stretch reads ITLQNAAVDC…DESCPSCRLS (117 aa). The region spanning 52 to 131 is the Ig-like C2-type domain; it reads PSPNLNSSMN…VNVSNLMKYS (80 aa). An N-linked (GlcNAc...) asparagine glycan is attached at N68. C73 and C120 form a disulfide bridge. The helical transmembrane segment at 151–171 threads the bilayer; sequence LLLPGLLLGILVIVLVLAYLI. Residues 172–246 lie on the Cytoplasmic side of the membrane; that stretch reads HLKYKKGKKT…ADYIYSELTH (75 aa). 2 consecutive short sequence motifs (ITIM motif) follow at residues 214–219 and 239–244; these read IHYATP and YIYSEL. Phosphotyrosine occurs at positions 216 and 241.

In terms of assembly, monomer. Interacts (tyrosine-phosphorylated) with PTPN6, PTPN11 and INPP5D. Post-translationally, N-glycosylated. As to expression, expressed in myeloid cells (dendritic cells, macrophages and neutrophils but not in T-cells, B-cells or natural killer cells) and mast cells (at protein level).

It is found in the cell membrane. Its subcellular location is the secreted. Immunoglobulin-like receptor which plays an inhibitory role in degranulation of mast cells. Negatively regulates IgE-mediated mast cell activation and suppresses the type I immediate hypersensitivity reaction. The chain is Allergin-1 (Milr1) from Mus musculus (Mouse).